A 356-amino-acid polypeptide reads, in one-letter code: V-type proton ATPase subunit d (356 aa).

It belongs to the V-ATPase V0D/AC39 subunit family. V-ATPase is a heteromultimeric enzyme composed of a peripheral catalytic V1 complex (components A to H) attached to an integral membrane V0 proton pore complex (components: a, c, c', c'' and d).

Subunit of the integral membrane V0 complex of vacuolar ATPase. Vacuolar ATPase is responsible for acidifying a variety of intracellular compartments in eukaryotic cells, thus providing most of the energy required for transport processes in the vacuolar system. The chain is V-type proton ATPase subunit d (vatD-1) from Dictyostelium discoideum (Social amoeba).